The chain runs to 273 residues: Urease accessory protein UreD (273 aa).

It belongs to the UreD family. As to quaternary structure, ureD, UreF and UreG form a complex that acts as a GTP-hydrolysis-dependent molecular chaperone, activating the urease apoprotein by helping to assemble the nickel containing metallocenter of UreC. The UreE protein probably delivers the nickel.

Its subcellular location is the cytoplasm. Required for maturation of urease via the functional incorporation of the urease nickel metallocenter. The polypeptide is Urease accessory protein UreD (Rhizobium leguminosarum bv. trifolii (strain WSM2304)).